The following is an 896-amino-acid chain: DNA mismatch repair protein MutS (896 aa).

607 to 614 is a binding site for ATP; the sequence is GPNMSGKS. Residues 809–835 form a disordered region; the sequence is ANSVAPNTAASMPVEAADESQPVESET.

It belongs to the DNA mismatch repair MutS family.

Its function is as follows. This protein is involved in the repair of mismatches in DNA. It is possible that it carries out the mismatch recognition step. This protein has a weak ATPase activity. This Lactiplantibacillus plantarum (strain ATCC BAA-793 / NCIMB 8826 / WCFS1) (Lactobacillus plantarum) protein is DNA mismatch repair protein MutS.